The primary structure comprises 23 residues: SV40 early leader protein (23 aa).

The tract at residues 1 to 23 (MQRPRPPRPLSYSRSSEEAFLEA) is disordered.

The protein belongs to the polyomavirus early leader protein family.

May play a role in the lytic cycle. The sequence is that of SV40 early leader protein from Macaca (macaques).